Consider the following 601-residue polypeptide: Mitochondrial tRNA methylthiotransferase CDK5RAP1 (601 aa).

A mitochondrion-targeting transit peptide spans 1–33; the sequence is MHPLQCVLQVQRSLGWGPLASVSWLSLRMCRAH. The MTTase N-terminal domain maps to 100 to 220; that stretch reads RKVYLETYGC…LPRLLAVAES (121 aa). Residues C109, C145, C183, C258, C262, and C265 each coordinate [4Fe-4S] cluster. In terms of domain architecture, Radical SAM core spans 244-512; that stretch reads SASATSAFVS…ITIFREEATK (269 aa). Residues 515-590 enclose the TRAM domain; the sequence is QTSVGCTQLV…SQTLRGHVLC (76 aa).

It belongs to the methylthiotransferase family. MiaB subfamily. As to quaternary structure, interacts with CDK5R1 (p35 form). CDK5RAP1, CDK5RAP2 and CDK5RAP3 show competitive binding to CDK5R1. Forms a complex with CDK5R1 and CDK5. Requires [4Fe-4S] cluster as cofactor. As to expression, expressed in heart, brain, placenta, lung, liver, skeletal muscle, kidney and pancreas. Expressed in neurons of central nervous tissue. In terms of tissue distribution, mainly expressed in brain, placenta and testis. High expression in placenta and lung.

Its subcellular location is the mitochondrion. It catalyses the reaction N(6)-dimethylallyladenosine(37) in tRNA + (sulfur carrier)-SH + AH2 + 2 S-adenosyl-L-methionine = 2-methylsulfanyl-N(6)-dimethylallyladenosine(37) in tRNA + (sulfur carrier)-H + 5'-deoxyadenosine + L-methionine + A + S-adenosyl-L-homocysteine + 2 H(+). Its function is as follows. Methylthiotransferase that catalyzes the conversion of N6-(dimethylallyl)adenosine (i(6)A) to 2-methylthio-N6-(dimethylallyl)adenosine (ms(2)i(6)A) at position 37 (adjacent to the 3'-end of the anticodon) of four mitochondrial DNA-encoded tRNAs (Ser(UCN), Phe, Tyr and Trp). Essential for efficient and highly accurate protein translation by the ribosome. Specifically inhibits CDK5 activation by CDK5R1. Essential for efficient mitochondrial protein synthesis and respiratory chain; shows pathological consequences in mitochondrial disease. In Homo sapiens (Human), this protein is Mitochondrial tRNA methylthiotransferase CDK5RAP1.